We begin with the raw amino-acid sequence, 476 residues long: Glycogen synthase (476 aa).

Position 15 (K15) interacts with ADP-alpha-D-glucose.

It belongs to the glycosyltransferase 1 family. Bacterial/plant glycogen synthase subfamily.

It carries out the reaction [(1-&gt;4)-alpha-D-glucosyl](n) + ADP-alpha-D-glucose = [(1-&gt;4)-alpha-D-glucosyl](n+1) + ADP + H(+). It functions in the pathway glycan biosynthesis; glycogen biosynthesis. Synthesizes alpha-1,4-glucan chains using ADP-glucose. In Streptococcus sanguinis (strain SK36), this protein is Glycogen synthase.